The following is a 180-amino-acid chain: uncharacterized protein (180 aa).

The Nudix hydrolase domain occupies 35-163; sequence LRHRATYIVV…TPDSLKALAL (129 aa). The short motif at 72 to 94 is the Nudix box element; sequence GGVVQADEQLLESARREAEEELG. Mg(2+) is bound by residues Glu88 and Glu92.

Belongs to the Nudix hydrolase family. The cofactor is Mg(2+).

This is an uncharacterized protein from Shigella flexneri.